Here is a 235-residue protein sequence, read N- to C-terminus: 2-C-methyl-D-erythritol 4-phosphate cytidylyltransferase (235 aa).

This sequence belongs to the IspD/TarI cytidylyltransferase family. IspD subfamily.

It catalyses the reaction 2-C-methyl-D-erythritol 4-phosphate + CTP + H(+) = 4-CDP-2-C-methyl-D-erythritol + diphosphate. It functions in the pathway isoprenoid biosynthesis; isopentenyl diphosphate biosynthesis via DXP pathway; isopentenyl diphosphate from 1-deoxy-D-xylulose 5-phosphate: step 2/6. Functionally, catalyzes the formation of 4-diphosphocytidyl-2-C-methyl-D-erythritol from CTP and 2-C-methyl-D-erythritol 4-phosphate (MEP). The sequence is that of 2-C-methyl-D-erythritol 4-phosphate cytidylyltransferase from Pseudomonas putida (strain ATCC 700007 / DSM 6899 / JCM 31910 / BCRC 17059 / LMG 24140 / F1).